Consider the following 756-residue polypeptide: Multicystatin (756 aa).

Cystatin domains lie at 3 to 96 (IVGG…DDST), 97 to 191 (MPGG…DDIA), 192 to 285 (KLGG…DDSA), 286 to 380 (KTGG…DSAK), 381 to 474 (KLGG…DDSA), 475 to 568 (KLGG…DDSA), 569 to 662 (IIGG…DDSA), and 663 to 756 (KPGG…DATK). Short sequence motifs (secondary area of contact) lie at residues 48–52 (QIVAG), 142–146 (QVVAG), 237–241 (QVVAG), 331–335 (QLVSG), 426–430 (QVVAG), 520–524 (QLVAG), 614–618 (QLVAG), and 708–712 (QVVAG).

This sequence belongs to the cystatin family. Phytocystatin subfamily. Expressed abundantly in tuber and leaf.

Probably has a role in the plant's defense system. The protein is Multicystatin of Solanum tuberosum (Potato).